The sequence spans 220 residues: Peptide methionine sulfoxide reductase MsrA (220 aa).

Cys52 is a catalytic residue.

The protein belongs to the MsrA Met sulfoxide reductase family.

It carries out the reaction L-methionyl-[protein] + [thioredoxin]-disulfide + H2O = L-methionyl-(S)-S-oxide-[protein] + [thioredoxin]-dithiol. The catalysed reaction is [thioredoxin]-disulfide + L-methionine + H2O = L-methionine (S)-S-oxide + [thioredoxin]-dithiol. Its function is as follows. Has an important function as a repair enzyme for proteins that have been inactivated by oxidation. Catalyzes the reversible oxidation-reduction of methionine sulfoxide in proteins to methionine. The protein is Peptide methionine sulfoxide reductase MsrA of Corynebacterium diphtheriae (strain ATCC 700971 / NCTC 13129 / Biotype gravis).